Consider the following 238-residue polypeptide: Ribonuclease PH (238 aa).

Residues Arg86 and 124 to 126 (GTR) contribute to the phosphate site.

It belongs to the RNase PH family. In terms of assembly, homohexameric ring arranged as a trimer of dimers.

The catalysed reaction is tRNA(n+1) + phosphate = tRNA(n) + a ribonucleoside 5'-diphosphate. Its function is as follows. Phosphorolytic 3'-5' exoribonuclease that plays an important role in tRNA 3'-end maturation. Removes nucleotide residues following the 3'-CCA terminus of tRNAs; can also add nucleotides to the ends of RNA molecules by using nucleoside diphosphates as substrates, but this may not be physiologically important. Probably plays a role in initiation of 16S rRNA degradation (leading to ribosome degradation) during starvation. In Brucella abortus (strain S19), this protein is Ribonuclease PH.